A 105-amino-acid polypeptide reads, in one-letter code: Large ribosomal subunit protein uL22 (105 aa).

This sequence belongs to the universal ribosomal protein uL22 family. As to quaternary structure, part of the 50S ribosomal subunit.

Its function is as follows. This protein binds specifically to 23S rRNA; its binding is stimulated by other ribosomal proteins, e.g. L4, L17, and L20. It is important during the early stages of 50S assembly. It makes multiple contacts with different domains of the 23S rRNA in the assembled 50S subunit and ribosome. Functionally, the globular domain of the protein is located near the polypeptide exit tunnel on the outside of the subunit, while an extended beta-hairpin is found that lines the wall of the exit tunnel in the center of the 70S ribosome. This Sulfurimonas denitrificans (strain ATCC 33889 / DSM 1251) (Thiomicrospira denitrificans (strain ATCC 33889 / DSM 1251)) protein is Large ribosomal subunit protein uL22.